Reading from the N-terminus, the 211-residue chain is 3-demethoxyubiquinol 3-hydroxylase (211 aa).

The Fe cation site is built by Glu-60, Glu-90, His-93, Glu-142, Glu-174, and His-177.

The protein belongs to the COQ7 family. Fe cation is required as a cofactor.

It is found in the cell membrane. It carries out the reaction a 5-methoxy-2-methyl-3-(all-trans-polyprenyl)benzene-1,4-diol + AH2 + O2 = a 3-demethylubiquinol + A + H2O. The protein operates within cofactor biosynthesis; ubiquinone biosynthesis. Functionally, catalyzes the hydroxylation of 2-nonaprenyl-3-methyl-6-methoxy-1,4-benzoquinol during ubiquinone biosynthesis. This chain is 3-demethoxyubiquinol 3-hydroxylase, found in Francisella tularensis subsp. tularensis (strain FSC 198).